A 55-amino-acid chain; its full sequence is Spermatid nuclear transition protein 1 (55 aa).

A compositionally biased stretch (basic residues) spans 1–42 (MSTSRKLKSQGMRRGKNRTPHKGVKRSGSKRKYRKSSLKSRK). The disordered stretch occupies residues 1–55 (MSTSRKLKSQGMRRGKNRTPHKGVKRSGSKRKYRKSSLKSRKRCDDANRNLRSHL). S9, S36, S37, and S40 each carry phosphoserine.

Belongs to the nuclear transition protein 1 family. Testis.

It is found in the nucleus. The protein resides in the chromosome. In terms of biological role, plays a key role in the replacement of histones to protamine in the elongating spermatids of mammals. In condensing spermatids, loaded onto the nucleosomes, where it promotes the recruitment and processing of protamines, which are responsible for histone eviction. The polypeptide is Spermatid nuclear transition protein 1 (TNP1) (Bos taurus (Bovine)).